Consider the following 131-residue polypeptide: Profilin (131 aa).

It belongs to the profilin family. As to quaternary structure, occurs in many kinds of cells as a complex with monomeric actin in a 1:1 ratio.

It is found in the cytoplasm. The protein resides in the cytoskeleton. Binds to actin and affects the structure of the cytoskeleton. At high concentrations, profilin prevents the polymerization of actin, whereas it enhances it at low concentrations. By binding to PIP2, it inhibits the formation of IP3 and DG. The protein is Profilin of Fragaria ananassa (Strawberry).